The chain runs to 152 residues: Deoxyuridine 5'-triphosphate nucleotidohydrolase (152 aa).

Substrate-binding positions include 71 to 73 (RSG), Asn84, and 88 to 90 (LID).

Belongs to the dUTPase family. Requires Mg(2+) as cofactor.

The enzyme catalyses dUTP + H2O = dUMP + diphosphate + H(+). Its pathway is pyrimidine metabolism; dUMP biosynthesis; dUMP from dCTP (dUTP route): step 2/2. This enzyme is involved in nucleotide metabolism: it produces dUMP, the immediate precursor of thymidine nucleotides and it decreases the intracellular concentration of dUTP so that uracil cannot be incorporated into DNA. The polypeptide is Deoxyuridine 5'-triphosphate nucleotidohydrolase (Xanthomonas campestris pv. campestris (strain 8004)).